The following is a 472-amino-acid chain: 3-isopropylmalate dehydratase large subunit (472 aa).

Cys346, Cys406, and Cys409 together coordinate [4Fe-4S] cluster.

It belongs to the aconitase/IPM isomerase family. LeuC type 1 subfamily. Heterodimer of LeuC and LeuD. [4Fe-4S] cluster is required as a cofactor.

It carries out the reaction (2R,3S)-3-isopropylmalate = (2S)-2-isopropylmalate. The protein operates within amino-acid biosynthesis; L-leucine biosynthesis; L-leucine from 3-methyl-2-oxobutanoate: step 2/4. Catalyzes the isomerization between 2-isopropylmalate and 3-isopropylmalate, via the formation of 2-isopropylmaleate. The sequence is that of 3-isopropylmalate dehydratase large subunit from Thermus thermophilus (strain ATCC BAA-163 / DSM 7039 / HB27).